A 1187-amino-acid chain; its full sequence is MGRIFEYFVVCGLGPEMRTVDGDLGFHGMQTFYLPALLDQFPPTDQSPYPAPPPQLPTCVLPAGVEFHSSGFVSSDPASFPRSYPIVLTEGDGSKIFVSCIAFRDRVCEDIIEAYRLPPNTYADKCICLVSHAPNFRVLRNSLEEIFVLCFSSEGSCKPLWDIIAYMVSNVPLPTPGKDRVLFAVENCLLSVEAPPEDSLPQADISLQPLVQCLDVDNLIKLFTSVLVERRILIRSNKYSLLTLVSESICHLIYPFRWLQVYIPLLFFSGVDYIDAPTPYMMGLHSDVDTSNLAMDGVVVVDLDINQITTSEEIPQIPEPEFSTLRNDILKLLHPNVVAIDQLKGFGNSVEQCPKSLSKPWGEDHDLQLRVIFLKCFASILGGYRNFIENKVFSTDAFLKRRSRSTNQPPEPMLVQFLGSFAFLDYLERRLSSDEKSTNLLEKLQDAVGRGQDAMSILPKSSMEPEIITIAEPEVEESATRYTYDRFPASVRSEEQEEKRKQILAAASGALESNGRHPPSSPPGKNTKEDNFSSMERAAERERMVLDIQVKLQGLWLRLLKLGSDEDPLSSFEYGTILALIESDAEGIGGSGFIECIREHLYSGWHGQLSEEQFIAVKELLKMAVGRAASRSDLSTVRDALEVSAEMFKKDANNVSDYVQRHLISIPIWEELRFWEGYFEYLMEQPANESVNYATLVTARLIIVASHMAGLGLPDTEAWNMIETIAEKQKLGYKLLIKLRGFLSHVQQLRVGYWGASSFKQQAISAGLPSPRPKDVSVSDETQQPSEASGRSWVQSMFSRDTASRANSFSRVRKWVSDNASSDITAAAQKKIQTNVRVLKGHGGAVTALHSVTRREVCDLVGDREDAGFFISGSTDCLVKIWDPSLRGSELRATLKGHTGTVRAISSDRGKIVSGSDDLSVIVWDKQTTQLLEELKGHDSQVSCVKMLSGERVLTAAHDGTVKMWDVRTDMCVATVGRCSSAILSLEYDDSTGILAAAGRDTVANIWDIRSGKQMHKLKGHTKWIRSIRMVEDTLITGSDDWTARVWSVSRGSCDAVLACHAGPVQSVEYSPFDKGIITGSADGLLRFWENDEGGIKCVKNITLHSSSILSINAGENWLGIGAADNSMSLFHRPSNAGTKVSGWQLYRVPQRTAAVVRCVASDLERKRICSGGRNGVLRLWDATINI.

The region spanning 19 to 179 (TVDGDLGFHG…NVPLPTPGKD (161 aa)) is the uDENN domain. The region spanning 199–330 (SLPQADISLQ…EFSTLRNDIL (132 aa)) is the cDENN domain. Positions 332–437 (LLHPNVVAID…ERRLSSDEKS (106 aa)) constitute a dDENN domain. Disordered stretches follow at residues 508–536 (SGALESNGRHPPSSPPGKNTKEDNFSSME) and 765–793 (SAGLPSPRPKDVSVSDETQQPSEASGRSW). Basic and acidic residues predominate over residues 526–536 (NTKEDNFSSME). Positions 779–793 (SDETQQPSEASGRSW) are enriched in polar residues. WD repeat units follow at residues 841–892 (GHGG…SELR), 897–934 (GHTGTVRAISSDRGKIVSGSDDLSVIVWDKQTTQLLEE), 937–975 (GHDSQVSCVKMLSGERVLTAAHDGTVKMWDVRTDMCVAT), 978–1017 (RCSSAILSLEYDDSTGILAAAGRDTVANIWDIRSGKQMHK), 1020–1057 (GHTKWIRSIRMVEDTLITGSDDWTARVWSVSRGSCDAV), 1060–1099 (CHAGPVQSVEYSPFDKGIITGSADGLLRFWENDEGGIKCV), 1104–1141 (LHSSSILSINAGENWLGIGAADNSMSLFHRPSNAGTKV), and 1152–1187 (RTAAVVRCVASDLERKRICSGGRNGVLRLWDATINI).

As to quaternary structure, interacts with FLS2. Expressed in roots, rosette and cauline leaves, buds and flowers.

It is found in the cell membrane. The protein resides in the cytoplasmic vesicle. It localises to the clathrin-coated vesicle. In terms of biological role, involved in growth and development through its role in cytokinesis and polarized cell expansion. Required for plasma membrane internalization. May function in clathrin-mediated membrane trafficking, including plasma membrane endocytosis, essential to both cytokinesis and cell expansion. Acts as a negative regulator of basal resistance against bacteria. The sequence is that of DENN domain and WD repeat-containing protein SCD1 from Arabidopsis thaliana (Mouse-ear cress).